The chain runs to 422 residues: Replication factor C large subunit (422 aa).

Residue 63-70 (GPPGIGKT) coordinates ATP.

Belongs to the activator 1 small subunits family. RfcL subfamily. In terms of assembly, heteromultimer composed of small subunits (RfcS) and large subunits (RfcL).

Its function is as follows. Part of the RFC clamp loader complex which loads the PCNA sliding clamp onto DNA. In Pyrobaculum neutrophilum (strain DSM 2338 / JCM 9278 / NBRC 100436 / V24Sta) (Thermoproteus neutrophilus), this protein is Replication factor C large subunit.